Here is a 2514-residue protein sequence, read N- to C-terminus: Nuclear receptor corepressor 2 (2514 aa).

A compositionally biased stretch (polar residues) spans 1-13; it reads MSGSTQPVAQTWR. The disordered stretch occupies residues 1–24; it reads MSGSTQPVAQTWRATEPRYPPHSL. Position 18 is an asymmetric dimethylarginine (arginine 18). Phosphoserine occurs at positions 54, 67, 149, and 152. 2 disordered regions span residues 120 to 162 and 190 to 220; these read PSPL…ELEL and ISKL…PPIE. Threonine 156 is modified (phosphothreonine). Residues 174–215 adopt a coiled-coil conformation; that stretch reads QNMDRVDREITMVEQQISKLKKKQQQLEEEAAKPPEPEKPVS. Basic and acidic residues predominate over residues 203–212; the sequence is EAAKPPEPEK. A Phosphoserine modification is found at serine 215. Residues 254–312 are interaction with SIN3A/B; that stretch reads LPLYNQPSDTRQYHENIKINQAMRKKLILYFKRRNHARKQWEQKFCQRYDQLMEAWEKK. Residues 389-480 form a deacetylase activation domain (DAD) region; that stretch reads MRQLAVIPPM…YLTKKNENYK (92 aa). An SANT 1 domain is found at 427 to 478; that stretch reads QVMNMWSEQEKETFREKFMQHPKNFGLIASFLERKTVAECVLYYYLTKKNEN. 1D-myo-inositol 1,4,5,6-tetrakisphosphate-binding residues include lysine 449, tyrosine 470, and tyrosine 471. Disordered stretches follow at residues 487–622, 674–1081, and 1165–1186; these read YRRR…EMET, EKER…APPG, and SGVK…SLGV. The residue at position 493 (serine 493) is a Phosphoserine. Low complexity predominate over residues 494 to 510; that stretch reads QQQQQQQQQQQQQQQQQ. The span at 516–552 shows a compositional bias: basic and acidic residues; sequence SQEEKDEKEKEKEAEKEEEKPEVENDKEDLLKEKTDD. Residues 522–561 are a coiled coil; it reads EKEKEKEAEKEEEKPEVENDKEDLLKEKTDDTSGEDNDEK. Threonine 553 is modified (phosphothreonine). Residue serine 554 is modified to Phosphoserine. Composition is skewed to polar residues over residues 597–613 and 740–753; these read TPQQ…NESS and ATVN…SIPS. The region spanning 610–661 is the SANT 2 domain; sequence NESSRWTEEEMETAKKGLLEHGRNWSAIARMVGSKTVSQCKNFYFNYKKRQN. Phosphoserine occurs at positions 750 and 753. 2 stretches are compositionally biased toward pro residues: residues 777-796 and 806-822; these read GPPP…PTEP and PTPP…PPVV. A compositionally biased stretch (basic and acidic residues) spans 856–866; that stretch reads GKAEEPVKSEC. Position 878 is an N6-acetyllysine (lysine 878). Polar residues predominate over residues 902–921; it reads RATTAKSSGAPQDSDSSATC. Residues 937–948 show a composition bias toward low complexity; sequence LLSPRPSLLTPT. A Phosphoserine modification is found at serine 939. Threonine 946 carries the post-translational modification Phosphothreonine. The residue at position 956 (serine 956) is a Phosphoserine. Position 959 is an N6-acetyllysine (lysine 959). Residues 980–990 show a composition bias toward basic and acidic residues; that stretch reads KVHEPPREDAA. Pro residues predominate over residues 993–1004; sequence KPAPPAPPPPQN. The segment covering 1005 to 1014 has biased composition (polar residues); it reads LQPESDAPQQ. A Glycyl lysine isopeptide (Lys-Gly) (interchain with G-Cter in SUMO2) cross-link involves residue lysine 1168. Position 1173 is a phosphoserine (serine 1173). N6-acetyllysine is present on residues lysine 1210 and lysine 1240. Serine 1251 is modified (phosphoserine). The interval 1287–1307 is disordered; the sequence is TQCSKEDGRSSSGPPHETAAP. Serine 1323 carries the post-translational modification Phosphoserine. The residue at position 1383 (threonine 1383) is a Phosphothreonine. 2 disordered regions span residues 1440-1482 and 1506-1609; these read PLAP…SPGR and ESLK…HPIS. Serine 1479 carries the post-translational modification Phosphoserine. Residues 1513–1526 are compositionally biased toward low complexity; sequence GTASSSGGSIARGA. A phosphoserine mark is found at serine 1539, serine 1595, and serine 1619. Position 1653 is an asymmetric dimethylarginine (arginine 1653). 2 disordered regions span residues 1763-1867 and 1937-2124; these read TAPQ…TQDA and KEAP…PGVK. The segment covering 1766–1782 has biased composition (low complexity); sequence QPFSSRHSSSPLSPGGP. A phosphoserine mark is found at serine 1775 and serine 1778. Basic and acidic residues predominate over residues 1794-1813; the sequence is SERERDRDRERDRDREREKS. A Phosphoserine modification is found at serine 1861. Positions 1938–1952 are enriched in basic and acidic residues; sequence EAPRVARPERPRADT. Lysine 1959 is modified (N6-acetyllysine). Serine 2005 carries the post-translational modification Phosphoserine. An N6-acetyllysine modification is found at lysine 2026. A compositionally biased stretch (low complexity) spans 2043–2060; it reads SSYSPEGVEPVSPVSSPS. Residues serine 2046, serine 2054, serine 2057, serine 2058, and serine 2060 each carry the phosphoserine modification. The residue at position 2062 (threonine 2062) is a Phosphothreonine. The segment covering 2062-2085 has biased composition (basic and acidic residues); it reads THDKGLPKHLEELDKSHLEGELRP. Phosphoserine is present on serine 2077. Low complexity predominate over residues 2106-2117; it reads LPESQPSSSPLL. The tract at residues 2128–2131 is required for interaction with RARA in the absence of its ligand; it reads RVVT. Positions 2136 to 2140 match the CORNR box of ID1 motif; it reads ISEVI. 2 disordered regions span residues 2174–2235 and 2248–2269; these read RRPP…GHSR and QTEP…PAFF. Phosphoserine occurs at positions 2203, 2223, and 2258. Residues 2339-2343 carry the CORNR box of ID2 motif; sequence LEAII. Residues 2384-2500 are disordered; the sequence is DGRSDHTLTS…PHHAWDEEPK (117 aa). Serine 2413 is subject to Phosphoserine. Over residues 2482–2492 the composition is skewed to low complexity; it reads PAGSGPLAGPH.

The protein belongs to the N-CoR nuclear receptor corepressors family. Forms a large corepressor complex that contains SIN3A/B and histone deacetylases HDAC1 and HDAC2. This complex associates with the thyroid (TR) and the retinoid acid receptors (RAR) in the absence of ligand, and may stabilize their interaction with TFIIB. Interacts directly with RARA in the absence of ligand; the interaction represses RARA activity. Interacts (isoform SMRT) with HDAC10. Interacts with MINT. Component of the N-Cor repressor complex, at least composed of NCOR1, NCOR2, HDAC3, TBL1X, TBL1R, CORO2A and GPS2. Interacts with CBFA2T3 and ATXN1L. Interacts with RARB; the interaction is weak and does not repress RARB transactivational activity. Interacts (via 1D-myo-inositol 1,4,5,6-tetrakisphosphate) with HDAC3; promoting the histone deacetylase activity of HDAC3. Interacts with HDAC7 and C1D. Interacts with NR4A2; this interaction increases in the absence of PITX3. Interacts with BCL6 (via the BTB domain), required for BCL6 transcriptional repressor activity on a subset of target genes. Forms ternary complexes with BCOR and BCL6 on target gene promoters but, on enhancer elements, interacts with BCL6 and HDAC3 to repress proximal gene expression. May interact with DEAF1. Interacts with RXRA. Interacts with MECP2. Interacts with ZBTB7A. Interacts with AR. Interacts with TBL1Y. Interacts with SANBR (via the BTB domain). Ubiquitous. High levels of expression are detected in lung, spleen and brain.

The protein resides in the nucleus. Transcriptional corepressor that mediates the transcriptional repression activity of some nuclear receptors by promoting chromatin condensation, thus preventing access of the basal transcription. Acts by recruiting chromatin modifiers, such as histone deacetylases HDAC1, HDAC2 and HDAC3. Required to activate the histone deacetylase activity of HDAC3. Involved in the regulation BCL6-dependent of the germinal center (GC) reactions, mainly through the control of the GC B-cells proliferation and survival. Recruited by ZBTB7A to the androgen response elements/ARE on target genes, negatively regulates androgen receptor signaling and androgen-induced cell proliferation. In terms of biological role, isoform 1 and isoform 4 have different affinities for different nuclear receptors. The polypeptide is Nuclear receptor corepressor 2 (Homo sapiens (Human)).